A 95-amino-acid polypeptide reads, in one-letter code: Aspartyl/glutamyl-tRNA(Asn/Gln) amidotransferase subunit C (95 aa).

This sequence belongs to the GatC family. In terms of assembly, heterotrimer of A, B and C subunits.

The enzyme catalyses L-glutamyl-tRNA(Gln) + L-glutamine + ATP + H2O = L-glutaminyl-tRNA(Gln) + L-glutamate + ADP + phosphate + H(+). The catalysed reaction is L-aspartyl-tRNA(Asn) + L-glutamine + ATP + H2O = L-asparaginyl-tRNA(Asn) + L-glutamate + ADP + phosphate + 2 H(+). In terms of biological role, allows the formation of correctly charged Asn-tRNA(Asn) or Gln-tRNA(Gln) through the transamidation of misacylated Asp-tRNA(Asn) or Glu-tRNA(Gln) in organisms which lack either or both of asparaginyl-tRNA or glutaminyl-tRNA synthetases. The reaction takes place in the presence of glutamine and ATP through an activated phospho-Asp-tRNA(Asn) or phospho-Glu-tRNA(Gln). In Acidithiobacillus ferrooxidans (strain ATCC 23270 / DSM 14882 / CIP 104768 / NCIMB 8455) (Ferrobacillus ferrooxidans (strain ATCC 23270)), this protein is Aspartyl/glutamyl-tRNA(Asn/Gln) amidotransferase subunit C.